We begin with the raw amino-acid sequence, 160 residues long: SsrA-binding protein (160 aa).

It belongs to the SmpB family.

It is found in the cytoplasm. Required for rescue of stalled ribosomes mediated by trans-translation. Binds to transfer-messenger RNA (tmRNA), required for stable association of tmRNA with ribosomes. tmRNA and SmpB together mimic tRNA shape, replacing the anticodon stem-loop with SmpB. tmRNA is encoded by the ssrA gene; the 2 termini fold to resemble tRNA(Ala) and it encodes a 'tag peptide', a short internal open reading frame. During trans-translation Ala-aminoacylated tmRNA acts like a tRNA, entering the A-site of stalled ribosomes, displacing the stalled mRNA. The ribosome then switches to translate the ORF on the tmRNA; the nascent peptide is terminated with the 'tag peptide' encoded by the tmRNA and targeted for degradation. The ribosome is freed to recommence translation, which seems to be the essential function of trans-translation. The chain is SsrA-binding protein from Escherichia coli O139:H28 (strain E24377A / ETEC).